Reading from the N-terminus, the 282-residue chain is Eukaryotic translation initiation factor 3 subunit G (282 aa).

A disordered region spans residues 1 to 27; it reads MSSSKSLDWADDEDYGTGLPSIQTFDN. A phosphoserine mark is found at Ser-160 and Ser-164. An RRM domain is found at 202–280; the sequence is ATLRVTNLSD…LILRCEFSKP (79 aa).

Belongs to the eIF-3 subunit G family. Component of the eukaryotic translation initiation factor 3 (eIF-3) complex. The eIF-3 complex appears to include tif32/eif3a, SPAC25G10.08/eif3b, tif33/eif3c, SPBC4C3.07/eif3f, tif35/eif3g and sum1/eif3i. This set of common subunits may also associate exclusively with either moe1/eif3d and int6/eif3e, or with SPAC821.05/eif3h and SPAC1751.03/eif3m. The eIF-3 complex may also include SPAC3A12.13c/eif3j.

It localises to the cytoplasm. Functionally, RNA-binding component of the eukaryotic translation initiation factor 3 (eIF-3) complex, which is involved in protein synthesis of a specialized repertoire of mRNAs and, together with other initiation factors, stimulates binding of mRNA and methionyl-tRNAi to the 40S ribosome. The eIF-3 complex specifically targets and initiates translation of a subset of mRNAs involved in cell proliferation. This subunit can bind 18S rRNA. This chain is Eukaryotic translation initiation factor 3 subunit G (tif35), found in Schizosaccharomyces pombe (strain 972 / ATCC 24843) (Fission yeast).